Consider the following 82-residue polypeptide: Defensin-like protein 75 (82 aa).

The first 26 residues, methionine 1 to alanine 26, serve as a signal peptide directing secretion. 4 disulfides stabilise this stretch: cysteine 33–cysteine 66, cysteine 37–cysteine 55, cysteine 41–cysteine 64, and cysteine 45–cysteine 65.

Belongs to the DEFL family.

The protein localises to the secreted. The polypeptide is Defensin-like protein 75 (LCR45) (Arabidopsis thaliana (Mouse-ear cress)).